A 219-amino-acid polypeptide reads, in one-letter code: Protein YNG1 (219 aa).

A PHD-type; degenerate zinc finger spans residues 155–204 (EVYCFCRNVSYGPMVACDNPACPFEWFHYGCVGLKQAPKGKWYCSKDCKE). Zn(2+) is bound by residues Cys-158, Cys-160, Cys-171, Cys-176, His-182, Cys-185, Cys-198, and Cys-202.

It belongs to the ING family. Component of the NuA3 histone acetyltransferase (HAT) complex. The NuA3 HAT complex has 2 functionally distinct forms that participate in transcription. The NuA3a HAT complex is composed of at least NTO1, SAS3, TAF14, YNG1 and EAF6. The NuA3b HAT complex contains an additional subunit, PDP3. Interacts with H3K4me3 and to a lesser extent with H3K4me2.

It is found in the nucleus. In terms of biological role, histone-binding component of the NuA3a histone acetyltransferase complex. Targets the NuA3a HAT complex via histone H3K4me3 to facilitate transcription initiation at promoter regions. SAS3 then acetylates H3K14, leading to transcription initiation at a subset of genes. YNG1 is required for the HAT activity of NuA3 but not for its integrity. Mediates the interaction of SAS3 with nucleosomes. This chain is Protein YNG1 (YNG1), found in Saccharomyces cerevisiae (strain ATCC 204508 / S288c) (Baker's yeast).